A 137-amino-acid chain; its full sequence is Putative pre-16S rRNA nuclease (137 aa).

This sequence belongs to the YqgF nuclease family.

Its subcellular location is the cytoplasm. Functionally, could be a nuclease involved in processing of the 5'-end of pre-16S rRNA. This Clostridium botulinum (strain 657 / Type Ba4) protein is Putative pre-16S rRNA nuclease.